A 461-amino-acid polypeptide reads, in one-letter code: uncharacterized protein (461 aa).

Transmembrane regions (helical) follow at residues 18–38 and 124–144; these read IITW…FLIY and FIFL…ILSI. PLD phosphodiesterase domains lie at 197-224 and 374-401; these read YNYR…ADEY and TPGF…DYRS.

The protein belongs to the phospholipase D family. Cardiolipin synthase subfamily.

Its subcellular location is the cell membrane. This is an uncharacterized protein from Streptococcus mutans serotype c (strain ATCC 700610 / UA159).